Reading from the N-terminus, the 314-residue chain is Ferrochelatase (314 aa).

Fe cation-binding residues include His188 and Glu269.

The protein belongs to the ferrochelatase family.

The protein resides in the cytoplasm. It catalyses the reaction heme b + 2 H(+) = protoporphyrin IX + Fe(2+). It functions in the pathway porphyrin-containing compound metabolism; protoheme biosynthesis; protoheme from protoporphyrin-IX: step 1/1. Functionally, catalyzes the ferrous insertion into protoporphyrin IX. The chain is Ferrochelatase from Campylobacter fetus subsp. fetus (strain 82-40).